Here is a 605-residue protein sequence, read N- to C-terminus: Formin-binding protein 1-like (605 aa).

One can recognise an F-BAR domain in the interval 1–263 (MSWGTELWDQ…AAKSVDERRD (263 aa)). A coiled-coil region spans residues 66–258 (FTSCVAFFNI…EGMILAAKSV (193 aa)). The interval 245-535 (SKCLEGMILA…EFDDEFEDDD (291 aa)) is interaction with CDC42. Ser295 is subject to Phosphoserine. The stretch at 392–484 (LEDFSHLPPE…VEGKTGGRGD (93 aa)) forms a coiled coil. Residues 397–474 (HLPPEQRRKK…IHKNEAWLSE (78 aa)) enclose the REM-1 domain. Over residues 476–490 (EGKTGGRGDRRHSSD) the composition is skewed to basic and acidic residues. The interval 476 to 539 (EGKTGGRGDR…EFEDDDPLPA (64 aa)) is disordered. Ser488, Ser501, and Ser505 each carry phosphoserine. Residues 522-605 (GHHNEFDDEF…VTLEKNSKGS (84 aa)) form an interaction with DNM1 region. Acidic residues predominate over residues 527–536 (FDDEFEDDDP). Residues 538–599 (PAIGHCKAIY…PTSYIDVTLE (62 aa)) form the SH3 domain. The tract at residues 541-597 (GHCKAIYPFDGHNEGTLAMKEGEVLYIIEEDKGDGWTRARRQNGEEGYVPTSYIDVT) is interaction with DNM2 and WASL. The interaction with DAAM1, DIAPH1 and DIAPH2 stretch occupies residues 541-605 (GHCKAIYPFD…VTLEKNSKGS (65 aa)).

Belongs to the FNBP1 family. Homodimerizes, the dimers can polymerize end-to-end to form filamentous structures. Interacts with GTP-bound CDC42. Interacts with DAAM1, DIAPH1, DIAPH2, DNM1, DNM2 and WASL/N-WASP. Interacts with ATG3. Interacts (via SH3 domain) with ABI1, WASF2, CDC42 and WIPF1.

Its subcellular location is the cytoplasm. The protein resides in the cytoskeleton. It localises to the cell cortex. It is found in the cytoplasmic vesicle. The protein localises to the cell membrane. Its function is as follows. Required to coordinate membrane tubulation with reorganization of the actin cytoskeleton during endocytosis. May bind to lipids such as phosphatidylinositol 4,5-bisphosphate and phosphatidylserine and promote membrane invagination and the formation of tubules. Also promotes CDC42-induced actin polymerization by activating the WASL/N-WASP-WASPIP/WIP complex, the predominant form of WASL/N-WASP in cells. Actin polymerization may promote the fission of membrane tubules to form endocytic vesicles. Essential for autophagy of intracellular bacterial pathogens. This chain is Formin-binding protein 1-like (FNBP1L), found in Homo sapiens (Human).